A 289-amino-acid chain; its full sequence is RNA-binding protein CP31B, chloroplastic (289 aa).

A chloroplast-targeting transit peptide spans 1-71 (MTSSVLTPSL…NSSPVVTFVS (71 aa)). 2 consecutive RRM domains span residues 113 to 191 (AKLF…RAAP) and 207 to 285 (FRIY…VAEE).

In terms of processing, ADP-ribosylated by the Pseudomonas syringae type III effector HopU1. ADP-ribosylation reduces the ability of the protein to bind RNA.

It localises to the plastid. It is found in the chloroplast. Functionally, required for specific RNA editing events in chloroplasts and stabilizes specific chloroplast mRNAs. This chain is RNA-binding protein CP31B, chloroplastic, found in Arabidopsis thaliana (Mouse-ear cress).